A 108-amino-acid polypeptide reads, in one-letter code: ATP-dependent Clp protease adapter protein ClpS (108 aa).

Positions 1 to 10 (MADSDKHGDE) are enriched in basic and acidic residues. The interval 1–21 (MADSDKHGDEGPSTGVVVKAK) is disordered.

It belongs to the ClpS family. Binds to the N-terminal domain of the chaperone ClpA.

Functionally, involved in the modulation of the specificity of the ClpAP-mediated ATP-dependent protein degradation. The sequence is that of ATP-dependent Clp protease adapter protein ClpS from Rhodospirillum centenum (strain ATCC 51521 / SW).